The sequence spans 81 residues: uncharacterized protein (81 aa).

2 helical membrane-spanning segments follow: residues 27–47 (ASLLFFGQTILFVFLSYLNLT) and 54–74 (IFGAYLTIFFAGFTYYSIFIM).

It localises to the cell membrane. This is an uncharacterized protein from Bacillus subtilis (strain 168).